A 440-amino-acid chain; its full sequence is UPF0489 protein C5orf22 homolog (440 aa).

A disordered region spans residues 187–207 (VEGSSSGIQSSTSESSEDGLM). Over residues 188–200 (EGSSSGIQSSTSE) the composition is skewed to low complexity.

This sequence belongs to the UPF0489 family.

In Xenopus tropicalis (Western clawed frog), this protein is UPF0489 protein C5orf22 homolog.